A 358-amino-acid chain; its full sequence is UDP-N-acetylglucosamine--N-acetylmuramyl-(pentapeptide) pyrophosphoryl-undecaprenol N-acetylglucosamine transferase (358 aa).

UDP-N-acetyl-alpha-D-glucosamine contacts are provided by residues T13–G15, N125, R161, S189, I244, and Q288.

This sequence belongs to the glycosyltransferase 28 family. MurG subfamily.

It localises to the cell membrane. The catalysed reaction is di-trans,octa-cis-undecaprenyl diphospho-N-acetyl-alpha-D-muramoyl-L-alanyl-D-glutamyl-meso-2,6-diaminopimeloyl-D-alanyl-D-alanine + UDP-N-acetyl-alpha-D-glucosamine = di-trans,octa-cis-undecaprenyl diphospho-[N-acetyl-alpha-D-glucosaminyl-(1-&gt;4)]-N-acetyl-alpha-D-muramoyl-L-alanyl-D-glutamyl-meso-2,6-diaminopimeloyl-D-alanyl-D-alanine + UDP + H(+). It functions in the pathway cell wall biogenesis; peptidoglycan biosynthesis. In terms of biological role, cell wall formation. Catalyzes the transfer of a GlcNAc subunit on undecaprenyl-pyrophosphoryl-MurNAc-pentapeptide (lipid intermediate I) to form undecaprenyl-pyrophosphoryl-MurNAc-(pentapeptide)GlcNAc (lipid intermediate II). The chain is UDP-N-acetylglucosamine--N-acetylmuramyl-(pentapeptide) pyrophosphoryl-undecaprenol N-acetylglucosamine transferase from Baumannia cicadellinicola subsp. Homalodisca coagulata.